Here is a 282-residue protein sequence, read N- to C-terminus: Heme oxygenase 1, chloroplastic (282 aa).

The N-terminal 56 residues, 1–56, are a transit peptide targeting the chloroplast; it reads MASATVVSQIQSLYIIKPRLSPPPPPHRQFRSIYFPTTRLLQQHRFRQMKSVVIVP. His86 provides a ligand contact to heme b.

This sequence belongs to the heme oxygenase family. In terms of tissue distribution, highly expressed in root nodules and, to a lower extent, in leaves, shoots, roots, flowers and pods (at protein level).

It localises to the plastid. The protein localises to the chloroplast. The enzyme catalyses heme b + 3 reduced [NADPH--hemoprotein reductase] + 3 O2 = biliverdin IXalpha + CO + Fe(2+) + 3 oxidized [NADPH--hemoprotein reductase] + 3 H2O + H(+). In terms of biological role, key enzyme in the synthesis of the chromophore of the phytochrome family of plant photoreceptors. Catalyzes the opening of the heme ring to form the open-chain tetrapyrrole biliverdin IX with the release of iron and carbon monoxide (CO). Produces specifically the biliverdin IX-alpha isomer. Can form complex with heme, is ferredoxin-dependent and its activity is increased in the presence of ascorbate. May affect the plastid-to-nucleus signaling pathway by perturbing tetrapyrrole synthesis. The plastid-to-nucleus signal plays an important role in the coordinated expression of both nuclear- and chloroplast-localized genes that encode photosynthesis-related proteins. Required for efficient symbiotic nitrogen fixation (SNF) in root nodules. Responsible for heme catabolism in uninfected nodule interstitial cells (UC), preventing superoxide production under stressful conditions (e.g. nitrate exposure and darkness) and catalyzing biliverdin (BV) production in senescing green nodules. This is Heme oxygenase 1, chloroplastic from Lotus japonicus (Lotus corniculatus var. japonicus).